The sequence spans 392 residues: ADP-ribosylhydrolase ARH1 (392 aa).

The Mg(2+) site is built by serine 79, aspartate 80, and aspartate 81. Lysine 109 is a substrate binding site. The interval 125–127 (IQT) is substrate. Glycine 159 is a substrate binding site. 3 substrate regions span residues 192-194 (HNN), 309-311 (FSG), and 315-316 (SS). Mg(2+)-binding residues include aspartate 348, aspartate 350, and serine 351.

The protein belongs to the ADP-ribosylglycohydrolase family. In terms of assembly, monomer. It depends on Mg(2+) as a cofactor.

The catalysed reaction is N(omega)-(ADP-D-ribosyl)-L-arginyl-[protein] + H2O = ADP-D-ribose + L-arginyl-[protein]. Its function is as follows. Specifically acts as an arginine mono-ADP-ribosylhydrolase by mediating the removal of mono-ADP-ribose attached to arginine residues on proteins. The chain is ADP-ribosylhydrolase ARH1 (adprh) from Dictyostelium discoideum (Social amoeba).